The chain runs to 602 residues: MQSRSTVIYIRFVLWFLLLWVLFEKSHTEEDIIITTKNGKVRGMHLPVLGGTVTAFLGIPYAQPPLGRLRFKKPQSLTKWPDIWNATKYANSCYQNTDQSFPGFLGSEMWNPNTDLSEDCLYLNVWIPTPKPKNATVMIWIYGGSFQTGTSSLHVYDGKFLARVERVIVVSMNYRVGALGFLALPGNPEAPGNVGLFDQQLALQWVQKNIAAFGGNPKSVTLFGESAGAASVSLHLLSPESHPLFTRAILQSGSSNAPWAVTSRYEARNRTLTLAKFIGCSRENDTEIIKCLRNKDPQEILRHEVFVVPYGTLLSVNFGPTVDGDFLTDMPDTLLQLGQFKKTQILVGVNKDEGTAFLVYGAPGFSKDNNSIITRKEFQEGLKIFFPGVSEFGKESILFHYMDWLDDQRAEKYREALDDVVGDYNIICPALEFTKKFSDMGNNAFFYYFEHRSSKLPWPEWMGVMHGYEIEFVFGLPLERRVNYTKAEEIFSRSIMKRWANFAKYGNPNGTQNNSTRWPVFKSNEQKYFTLNTESPKVNTKLRAQQCRFWTLFFPKVLEITGNIDEVEREWKAGFHRWNNYMMDWKNQFNDYTSKKESCAGL.

The N-terminal stretch at 1 to 28 (MQSRSTVIYIRFVLWFLLLWVLFEKSHT) is a signal peptide. Asn-85 and Asn-134 each carry an N-linked (GlcNAc...) asparagine glycan. Residue 144-145 (GS) coordinates substrate. Residue Ser-226 is the Acyl-ester intermediate of the active site. Ser-226 bears the Phosphoserine mark. Asn-269 and Asn-284 each carry an N-linked (GlcNAc...) asparagine glycan. The active-site Charge relay system is Glu-353. Asn-369 is a glycosylation site (N-linked (GlcNAc...) asparagine). His-466 (charge relay system) is an active-site residue. Residues Asn-483, Asn-509, Asn-513, and Asn-514 are each glycosylated (N-linked (GlcNAc...) asparagine).

Belongs to the type-B carboxylesterase/lipase family. As to quaternary structure, homotetramer; disulfide-linked. Dimer of dimers. Present in most cells except erythrocytes.

Its subcellular location is the secreted. It catalyses the reaction an acylcholine + H2O = a carboxylate + choline + H(+). In terms of biological role, esterase with broad substrate specificity. Contributes to the inactivation of the neurotransmitter acetylcholine. Can degrade neurotoxic organophosphate esters. The protein is Cholinesterase (BCHE) of Bos taurus (Bovine).